A 62-amino-acid chain; its full sequence is Photosystem II reaction center protein Z (62 aa).

2 helical membrane passes run Ala-8–Ala-28 and Phe-41–Ile-61.

It belongs to the PsbZ family. PSII is composed of 1 copy each of membrane proteins PsbA, PsbB, PsbC, PsbD, PsbE, PsbF, PsbH, PsbI, PsbJ, PsbK, PsbL, PsbM, PsbT, PsbY, PsbZ, Psb30/Ycf12, at least 3 peripheral proteins of the oxygen-evolving complex and a large number of cofactors. It forms dimeric complexes.

It localises to the plastid. The protein resides in the chloroplast thylakoid membrane. Its function is as follows. May control the interaction of photosystem II (PSII) cores with the light-harvesting antenna, regulates electron flow through the 2 photosystem reaction centers. PSII is a light-driven water plastoquinone oxidoreductase, using light energy to abstract electrons from H(2)O, generating a proton gradient subsequently used for ATP formation. The protein is Photosystem II reaction center protein Z of Liriodendron tulipifera (Tuliptree).